The chain runs to 392 residues: Protein DJ-1 homolog A (392 aa).

PfpI endopeptidase domains lie at 6 to 174 and 212 to 378; these read KTVL…EQLF and PQIL…EKFY.

Belongs to the peptidase C56 family. In terms of assembly, homodimer. Interacts with CSD1 and GPX2.

Its subcellular location is the cytoplasm. The protein localises to the cytosol. The protein resides in the nucleus. Its function is as follows. Involved in oxidative stress response. Confers protection against diverse stresses by binding both CSD1 and GPX2 and mediating the cytosolic activation of the Cu-Zn-dependent superoxide dismutase activity of CSD1. This Arabidopsis thaliana (Mouse-ear cress) protein is Protein DJ-1 homolog A (DJ1A).